Consider the following 194-residue polypeptide: Flagellar transcriptional regulator FlhC (194 aa).

Zn(2+) is bound by residues Cys-139, Cys-142, Cys-159, and Cys-162.

This sequence belongs to the FlhC family. In terms of assembly, heterohexamer composed of two FlhC and four FlhD subunits. Each FlhC binds a FlhD dimer, forming a heterotrimer, and a hexamer assembles by dimerization of two heterotrimers. Zn(2+) serves as cofactor.

It is found in the cytoplasm. Functionally, functions in complex with FlhD as a master transcriptional regulator that regulates transcription of several flagellar and non-flagellar operons by binding to their promoter region. Activates expression of class 2 flagellar genes, including fliA, which is a flagellum-specific sigma factor that turns on the class 3 genes. Also regulates genes whose products function in a variety of physiological pathways. This Serratia marcescens protein is Flagellar transcriptional regulator FlhC.